Consider the following 450-residue polypeptide: Bifunctional protein GlmU (450 aa).

The tract at residues methionine 1–arginine 229 is pyrophosphorylase. Residues leucine 8–glycine 11, lysine 22, glutamine 72, and glycine 77–threonine 78 each bind UDP-N-acetyl-alpha-D-glucosamine. Aspartate 102 contacts Mg(2+). Positions 139, 154, and 227 each coordinate UDP-N-acetyl-alpha-D-glucosamine. Asparagine 227 serves as a coordination point for Mg(2+). The interval valine 230–asparagine 250 is linker. Residues glycine 251–lysine 450 are N-acetyltransferase. UDP-N-acetyl-alpha-D-glucosamine is bound by residues arginine 332 and lysine 350. The active-site Proton acceptor is histidine 362. UDP-N-acetyl-alpha-D-glucosamine is bound by residues tyrosine 365 and asparagine 376. Acetyl-CoA is bound by residues asparagine 385–tyrosine 386, alanine 422, and arginine 439.

In the N-terminal section; belongs to the N-acetylglucosamine-1-phosphate uridyltransferase family. The protein in the C-terminal section; belongs to the transferase hexapeptide repeat family. In terms of assembly, homotrimer. Mg(2+) serves as cofactor.

The protein resides in the cytoplasm. The enzyme catalyses alpha-D-glucosamine 1-phosphate + acetyl-CoA = N-acetyl-alpha-D-glucosamine 1-phosphate + CoA + H(+). It carries out the reaction N-acetyl-alpha-D-glucosamine 1-phosphate + UTP + H(+) = UDP-N-acetyl-alpha-D-glucosamine + diphosphate. Its pathway is nucleotide-sugar biosynthesis; UDP-N-acetyl-alpha-D-glucosamine biosynthesis; N-acetyl-alpha-D-glucosamine 1-phosphate from alpha-D-glucosamine 6-phosphate (route II): step 2/2. It functions in the pathway nucleotide-sugar biosynthesis; UDP-N-acetyl-alpha-D-glucosamine biosynthesis; UDP-N-acetyl-alpha-D-glucosamine from N-acetyl-alpha-D-glucosamine 1-phosphate: step 1/1. It participates in bacterial outer membrane biogenesis; LPS lipid A biosynthesis. Functionally, catalyzes the last two sequential reactions in the de novo biosynthetic pathway for UDP-N-acetylglucosamine (UDP-GlcNAc). The C-terminal domain catalyzes the transfer of acetyl group from acetyl coenzyme A to glucosamine-1-phosphate (GlcN-1-P) to produce N-acetylglucosamine-1-phosphate (GlcNAc-1-P), which is converted into UDP-GlcNAc by the transfer of uridine 5-monophosphate (from uridine 5-triphosphate), a reaction catalyzed by the N-terminal domain. This is Bifunctional protein GlmU from Staphylococcus aureus (strain NCTC 8325 / PS 47).